The primary structure comprises 352 residues: Methylthioribose-1-phosphate isomerase (352 aa).

Substrate contacts are provided by residues 49–51 (RGA), R93, and Q202. The active-site Proton donor is the D243. A substrate-binding site is contributed by 253–254 (NK).

This sequence belongs to the eIF-2B alpha/beta/delta subunits family. MtnA subfamily.

It carries out the reaction 5-(methylsulfanyl)-alpha-D-ribose 1-phosphate = 5-(methylsulfanyl)-D-ribulose 1-phosphate. Its pathway is amino-acid biosynthesis; L-methionine biosynthesis via salvage pathway; L-methionine from S-methyl-5-thio-alpha-D-ribose 1-phosphate: step 1/6. In terms of biological role, catalyzes the interconversion of methylthioribose-1-phosphate (MTR-1-P) into methylthioribulose-1-phosphate (MTRu-1-P). This chain is Methylthioribose-1-phosphate isomerase, found in Magnetococcus marinus (strain ATCC BAA-1437 / JCM 17883 / MC-1).